The following is a 357-amino-acid chain: Putative F-box protein At5g50220 (357 aa).

The 47-residue stretch at 27–73 (IAEDIGIPIDLMVEILKKLPAKSLIKFQCVSKQWSSIIGSSRDFIDS) folds into the F-box domain.

In Arabidopsis thaliana (Mouse-ear cress), this protein is Putative F-box protein At5g50220.